A 349-amino-acid polypeptide reads, in one-letter code: 11-beta-hydroxysteroid dehydrogenase A (349 aa).

A helical; Signal-anchor for type II membrane protein membrane pass occupies residues 10 to 30; that stretch reads LVAPPFTFFFLCLFLPPYWGL. Positions 13–26 match the Proline-knob motif; it reads PPFTFFFLCLFLPP. NADP(+) contacts are provided by residues 54 to 80, aspartate 105, and 132 to 135; these read GASS…SARR and NAAI. Serine 184 is a binding site for substrate. The active-site Proton acceptor is the tyrosine 197. Residues 197 to 201 and lysine 201 each bind NADP(+); that span reads YSASK.

This sequence belongs to the short-chain dehydrogenases/reductases (SDR) family. As to expression, expressed in seeds (at protein level).

The protein localises to the lipid droplet. It is found in the membrane. The enzyme catalyses an 11beta-hydroxysteroid + NADP(+) = an 11-oxosteroid + NADPH + H(+). Functionally, has dehydrogenase activity against 11 beta-hydroxysteroid and 17 beta-hydroxysteroid. May be involved in signal transduction regulated by various sterols. This Arachis hypogaea (Peanut) protein is 11-beta-hydroxysteroid dehydrogenase A.